The sequence spans 569 residues: Laccase-6 (569 aa).

Positions 1-29 are cleaved as a signal peptide; it reads MTSSAVPSLFRLSFLLFTLQVMNIGRIGA. Plastocyanin-like domains are found at residues 37–153 and 163–315; these read KVQT…PKAS and NEHT…YIGA. A glycan (N-linked (GlcNAc...) asparagine) is linked at N83. Cu cation is bound by residues H87, H89, H132, and H134. 6 N-linked (GlcNAc...) asparagine glycosylation sites follow: N208, N303, N319, N392, N438, and N444. Positions 417–553 constitute a Plastocyanin-like 3 domain; it reads DFPTTPEKAY…STMFIVKNGK (137 aa). Residues H472, H475, H477, H532, C533, H534, H538, and M543 each contribute to the Cu cation site.

This sequence belongs to the multicopper oxidase family. Cu cation serves as cofactor. In terms of tissue distribution, predominantly expressed in the inflorescence stem, but not in siliques.

It is found in the secreted. The protein resides in the extracellular space. The protein localises to the apoplast. The catalysed reaction is 4 hydroquinone + O2 = 4 benzosemiquinone + 2 H2O. Its function is as follows. Lignin degradation and detoxification of lignin-derived products. This chain is Laccase-6 (LAC6), found in Arabidopsis thaliana (Mouse-ear cress).